The following is a 217-amino-acid chain: tRNA (guanine-N(7)-)-methyltransferase (217 aa).

Residues Glu-43, Asp-68, Asn-101, and Asn-123 each coordinate S-adenosyl-L-methionine. Lys-127 is a binding site for substrate. The segment at 129–134 (KHNKRR) is interaction with RNA. Substrate contacts are provided by residues Asp-159 and 196 to 199 (TEYE).

Belongs to the class I-like SAM-binding methyltransferase superfamily. TrmB family.

The enzyme catalyses guanosine(46) in tRNA + S-adenosyl-L-methionine = N(7)-methylguanosine(46) in tRNA + S-adenosyl-L-homocysteine. It functions in the pathway tRNA modification; N(7)-methylguanine-tRNA biosynthesis. Its function is as follows. Catalyzes the formation of N(7)-methylguanine at position 46 (m7G46) in tRNA. The protein is tRNA (guanine-N(7)-)-methyltransferase of Clostridium botulinum (strain Okra / Type B1).